We begin with the raw amino-acid sequence, 794 residues long: Interphotoreceptor matrix proteoglycan 1 (794 aa).

The signal sequence occupies residues 1 to 20 (MHLEAARVIFFLWIFLQVQG). Positions 202–213 (MTTAQRNPQLHP) are enriched in polar residues. 3 disordered regions span residues 202-221 (MTTA…RVPT), 314-355 (KGKA…LYPT), and 413-449 (SPEL…AMTS). The region spanning 236 to 357 (LEQKVELSIS…KQRELYPTAS (122 aa)) is the SEA 1 domain. Residues 332–351 (NKIESEGDPRGTTEEEKQRE) show a composition bias toward basic and acidic residues. 2 O-linked (GalNAc...) threonine glycosylation sites follow: Thr-425 and Thr-439. The O-linked (GalNAc...) serine glycan is linked to Ser-443. 2 O-linked (GalNAc...) threonine glycosylation sites follow: Thr-448 and Thr-450. In terms of domain architecture, SEA 2 spans 579–692 (RELVVFFSLR…YSLDVEPADQ (114 aa)). N-linked (GlcNAc...) asparagine glycosylation is present at Asn-624. A Heparin- and hyaluronan-binding motif is present at residues 629–637 (KQLEILNFR). Residue Asn-656 is glycosylated (N-linked (GlcNAc...) asparagine).

In terms of processing, highly glycosylated (N- and O-linked carbohydrates and sialic acid).

Its subcellular location is the cell projection. The protein resides in the cilium. It is found in the photoreceptor outer segment. The protein localises to the secreted. It localises to the extracellular space. Its subcellular location is the extracellular matrix. The protein resides in the interphotoreceptor matrix. It is found in the photoreceptor inner segment. Its function is as follows. Chondroitin sulfate-, heparin- and hyaluronan-binding protein. May serve to form a basic macromolecular scaffold comprising the insoluble interphotoreceptor matrix. The sequence is that of Interphotoreceptor matrix proteoglycan 1 (IMPG1) from Bos taurus (Bovine).